A 742-amino-acid chain; its full sequence is Synaptic vesicle glycoprotein 2A (742 aa).

The segment at 1 to 57 is interaction with SYT1; that stretch reads MEEGFRDRAAFIRGAKDIAKEVKKHAAKKVVKGLDRVQDEYSRRSYSRFEEEEDDDD. Residues 1 to 169 are Cytoplasmic-facing; that stretch reads MEEGFRDRAA…GHGRFQWTLY (169 aa). Over residues 40 to 49 the composition is skewed to basic and acidic residues; that stretch reads EYSRRSYSRF. A disordered region spans residues 40-145; sequence EYSRRSYSRF…RGEAQRRKDR (106 aa). 2 positions are modified to phosphoserine: S80 and S81. T84 is subject to Phosphothreonine. The segment covering 122–137 has biased composition (gly residues); that stretch reads VRGGLSDGEGPPGGRG. S127 is modified (phosphoserine). A helical transmembrane segment spans residues 170–190; it reads FVLGLALMADGVEVFVVGFVL. Residues 191–205 are Extracellular-facing; that stretch reads PSAEKDMCLSDSNKG. A helical membrane pass occupies residues 206–226; the sequence is MLGLIVYLGMMVGAFLWGGLA. Topologically, residues 227-233 are cytoplasmic; it reads DRLGRRQ. The helical transmembrane segment at 234 to 254 threads the bilayer; the sequence is CLLISLSVNSVFAFFSSFVQG. The Extracellular portion of the chain corresponds to 255-262; the sequence is YGTFLFCR. A helical membrane pass occupies residues 263 to 283; it reads LLSGVGIGGSIPIVFSYFSEF. Topologically, residues 284 to 294 are cytoplasmic; the sequence is LAQEKRGEHLS. The chain crosses the membrane as a helical span at residues 295 to 315; the sequence is WLCMFWMIGGVYAAAMAWAII. At 316–334 the chain is on the extracellular side; the sequence is PHYGWSFQMGSAYQFHSWR. A helical transmembrane segment spans residues 335–355; sequence VFVLVCAFPSVFAIGALTTQP. The Cytoplasmic portion of the chain corresponds to 356–447; the sequence is ESPRFFLENG…CFSPEYRRIT (92 aa). S393 carries the post-translational modification Phosphoserine. Residues 448–468 traverse the membrane as a helical segment; it reads LMMMGVWFTMSFSYYGLTVWF. Residues 469-598 lie on the Extracellular side of the membrane; it reads PDMIRHLQAV…GTGEGAYMVY (130 aa). Y480 bears the Phosphotyrosine mark. N-linked (GlcNAc...) asparagine glycosylation is found at N498 and N548. N573 carries N-linked (GlcNAc...) asparagine; alternate glycosylation. A glycan (N-linked (HexNAc...) asparagine; alternate) is linked at N573. The helical transmembrane segment at 599 to 619 threads the bilayer; sequence FVSFLGTLAVLPGNIVSALLM. At 620–626 the chain is on the cytoplasmic side; sequence DKIGRLR. Residues 627 to 647 traverse the membrane as a helical segment; the sequence is MLAGSSVLSCVSCFFLSFGNS. Residues 648–651 lie on the Extracellular side of the membrane; sequence ESAM. A helical membrane pass occupies residues 652–672; sequence IALLCLFGGVSIASWNALDVL. Over 673 to 685 the chain is Cytoplasmic; it reads TVELYPSDKRTTA. The chain crosses the membrane as a helical span at residues 686-708; sequence FGFLNALCKLAAVLGISIFTSFV. Residues 709–712 are Extracellular-facing; that stretch reads GITK. Residues 713–731 traverse the membrane as a helical segment; it reads AAPILFASAALALGSSLAL. Residues 732 to 742 lie on the Cytoplasmic side of the membrane; it reads KLPETRGQVLQ.

This sequence belongs to the major facilitator superfamily. In terms of assembly, interacts with SYT1/synaptotagmin-1 in a calcium-dependent manner. Binds the adapter protein complex AP-2. (Microbial infection) Interacts with C.botulinum neurotoxin type A1 and type A2 (BoNT/A, botA). Interaction is improved by glycosylation of SV2. As to quaternary structure, (Microbial infection) Copurifies with C.botulinum neurotoxin type B (BoNT/B, botB) and synaptotagmin 1 (SYT1). Interaction does not require glycosylation of SV2 or SYT1 proteins. Another group finds only copurification with SYT1 and SYT2. In terms of assembly, (Microbial infection) Interacts with C.botulinum neurotoxin type E (BoNT/E). Interaction requires glycosylation of SV2 proteins. (Microbial infection) Copurifies with C.botulinum neurotoxin type F (BoNT/F) and synaptotagmin 1 (SYT2). Another group finds only copurification with BoNT/F. Interaction requires SV2 glycosylation. Phosphorylation by CK1 of the N-terminal cytoplasmic domain regulates interaction with SYT1. In terms of processing, N-glycosylated, on at least 3 residues. As to expression, widely expressed throughout the brain (at protein level). Expressed by neural and endocrine cells of brain and spinal cord.

The protein localises to the presynapse. The protein resides in the cytoplasmic vesicle. It is found in the secretory vesicle. It localises to the synaptic vesicle membrane. Plays a role in the control of regulated secretion in neural and endocrine cells, enhancing selectively low-frequency neurotransmission. Positively regulates vesicle fusion by maintaining the readily releasable pool of secretory vesicles. Its function is as follows. (Microbial infection) Receptor for C.botulinum neurotoxin type A (BoNT/A, botA); the toxin binds via extracellular loop 4. Restores uptake of BoNT/A in mouse cells that are deleted for SV2 receptor. Glycosylation of Asn-573 is not essential for receptor activity, but enhances uptake. Also serves as a receptor for the closely related C.botulinum neurotoxin type A2; glycosylation is not essential but enhances the interaction. Functionally, possible receptor for C.botulinum neurotoxin type D (BoNT/D, botD); BoNT/D does not bind to extracellular loop 4 as do BoNT/A and BoNT/E, nor to loop 1 or loop 3. Another group does not find a convincing interaction with SV2. In terms of biological role, (Microbial infection) Receptor for C.botulinum neurotoxin type E (BoNT/E); the toxin probably binds via extracellular loop 4 and requires glycosylation of Asn-573. Restores uptake of BoNT/E in mouse cells that are deleted for SV2 receptor. (Microbial infection) Receptor for C.botulinum neurotoxin type F (BoNT/F). Binding requires glycosylation of Asn-573. The sequence is that of Synaptic vesicle glycoprotein 2A (Sv2a) from Rattus norvegicus (Rat).